We begin with the raw amino-acid sequence, 145 residues long: Mitochondrial import receptor subunit TOM20 homolog (145 aa).

At 1 to 6 (MVGRNS) the chain is on the mitochondrial intermembrane side. The chain crosses the membrane as a helical span at residues 7-24 (AIAAGVCGALFIGYCIYF). The Cytoplasmic portion of the chain corresponds to 25–145 (DRKRRSDPNF…AQSLAEDDVE (121 aa)). Glycyl lysine isopeptide (Lys-Gly) (interchain with G-Cter in ubiquitin) cross-links involve residues K35, K56, K61, and K68. Phosphoserine occurs at positions 135 and 138.

It belongs to the Tom20 family. As to quaternary structure, forms part of the preprotein translocase complex of the outer mitochondrial membrane (TOM complex) which consists of at least 7 different proteins (TOMM5, TOMM6, TOMM7, TOMM20, TOMM22, TOMM40 and TOMM70). Interacts with TOM22. Interacts with APEX1. Interacts with TBC1D21. Upon mitochondrial depolarization, interacts with PINK1; the interaction is required for PINK1-TOM-TIM23 supercomplex formation which is critical for PINK1 stabilization at the outer mitochondrial membrane, kinase activation and downstream mitophagy. Ubiquitinated by PRKN during mitophagy, leading to its degradation and enhancement of mitophagy. Deubiquitinated by USP30.

It is found in the mitochondrion outer membrane. Functionally, central component of the receptor complex responsible for the recognition and translocation of cytosolically synthesized mitochondrial preproteins. Together with TOM22 functions as the transit peptide receptor at the surface of the mitochondrion outer membrane and facilitates the movement of preproteins into the TOM40 translocation pore. Required for the translocation across the mitochondrial outer membrane of cytochrome P450 monooxygenases. In Bos taurus (Bovine), this protein is Mitochondrial import receptor subunit TOM20 homolog (TOMM20).